Consider the following 687-residue polypeptide: Dictomallein (687 aa).

2 disordered regions span residues 1–45 (MGNG…SRRL) and 73–112 (TAGG…STSA). Residues 233–501 (PVFGTDADVQ…QAWIASRVLA (269 aa)) form the Peptidase M66 domain. Residue His-393 participates in Zn(2+) binding. Glu-394 is an active-site residue. The Zn(2+) site is built by His-397 and His-403.

The protein belongs to the dictomallein family. Zn(2+) is required as a cofactor.

This Burkholderia pseudomallei (strain 1710b) protein is Dictomallein (dtmL).